The following is a 336-amino-acid chain: MDTNSTTPMSITDMECNPNYSYLVENIKYLLQAAYMVPPAFLYARILYVIWVKHRKVYSRHQFFVIYSMDSIVGFILLLLDIFITRFFVYVPQLCIPASKFFQSHSLLMNIYYPLLNYLHCAQPLIQIFLTLNRMSSVIWPVDHNKVWSKNLSFIVAFVSLSPFLIIWNTIISPKIIIYYFGGFFMLGLKAVEWADISLFLFLVRSVAVIITVASTVIMFLRMSKMKKRMKSSERTLCLACVIHSICFMVPSFFEALANFNEAYGSSWVNFLIQPFAWDVLNVGSPLIMIFVSGQLRHHVLEISIGCCKPKNKPKTITVHTVTAHVSSRNGTSIFR.

The next 7 helical transmembrane spans lie at 30-50, 64-84, 111-131, 152-172, 200-220, 237-257, and 271-291; these read LLQA…LYVI, FVIY…DIFI, IYYP…IFLT, LSFI…NTII, FLFL…VIMF, LCLA…FEAL, and FLIQ…IMIF.

The protein belongs to the nematode receptor-like protein srg family.

Its subcellular location is the membrane. This chain is Serpentine receptor class gamma-9 (srg-9), found in Caenorhabditis elegans.